The primary structure comprises 425 residues: Protein translocase subunit SecY (425 aa).

The next 10 helical transmembrane spans lie at 15–35, 62–82, 113–131, 139–159, 168–188, 201–221, 266–286, 304–324, 364–384, and 385–405; these read LLSLGILLFIRMGTFLPVPGI, TVVVGLFTLNIFPYINASIIM, LLTLGWSLIQSTSVAFYLK, LVLAFEIVIWLTTGAMIVLWL, LGNGPSLLIYTNIVSSLPGFV, IGSWLLSGFVLFVALYGIVLL, PIILTTAVLVIPTFIYNLGLL, IIYWVSYFVLILLFSLFYSTI, LLGAIMLALLATLPNIIQAIL, and SLSGFTNLGTTSLLILVGVIL.

It belongs to the SecY/SEC61-alpha family. In terms of assembly, component of the plastid Sec protein translocase complex, which is composed of at least SecY, SecE and SecG.

The protein resides in the plastid. It is found in the chloroplast thylakoid membrane. Functionally, the central subunit of the protein translocation channel SecYE. Consists of two halves formed by TMs 1-5 and 6-10. These two domains form a lateral gate at the front which open onto the bilayer between TMs 2 and 7, and are clamped together by SecE at the back. The channel is closed by both a pore ring composed of hydrophobic SecY resides and a short helix (helix 2A) on the extracellular side of the membrane which forms a plug. The protein is Protein translocase subunit SecY of Trieres chinensis (Marine centric diatom).